Reading from the N-terminus, the 76-residue chain is MQVLVRDNNVDQALRALKKKMQREGIFREMKMRGHYEKPSEKRAREKAEAVRRARKLARKRAQREGLVSGRPAAAR.

Residues 35-52 (HYEKPSEKRAREKAEAVR) show a composition bias toward basic and acidic residues. Residues 35 to 76 (HYEKPSEKRAREKAEAVRRARKLARKRAQREGLVSGRPAAAR) are disordered. Residues 53-62 (RARKLARKRA) show a composition bias toward basic residues.

The protein belongs to the bacterial ribosomal protein bS21 family.

This is Small ribosomal subunit protein bS21A from Chelativorans sp. (strain BNC1).